Here is a 409-residue protein sequence, read N- to C-terminus: Pyruvate dehydrogenase E1 component subunit alpha, mitochondrial (409 aa).

Residue Thr6 is modified to Phosphothreonine. 11 residues coordinate pyruvate: His109, Tyr135, Arg136, Ala174, Gly182, Val184, Asp213, Gly214, Ala215, Asn242, and Tyr244. Tyr135 and Arg136 together coordinate thiamine diphosphate. Thiamine diphosphate-binding residues include Gly182, Val184, Asp213, Gly214, Ala215, and Asn242. Asp213 lines the Mg(2+) pocket. Mg(2+)-binding residues include Asn242 and Tyr244. Tyr306 carries the post-translational modification Phosphotyrosine. His309 provides a ligand contact to thiamine diphosphate. A phosphoserine mark is found at Ser310 and Ser312.

As to quaternary structure, tetramer of 2 alpha and 2 beta subunits. It depends on thiamine diphosphate as a cofactor. Mg(2+) is required as a cofactor.

Its subcellular location is the mitochondrion matrix. It carries out the reaction N(6)-[(R)-lipoyl]-L-lysyl-[protein] + pyruvate + H(+) = N(6)-[(R)-S(8)-acetyldihydrolipoyl]-L-lysyl-[protein] + CO2. Its activity is regulated as follows. E1 activity is regulated by phosphorylation (inactivation) and dephosphorylation (activation) of the alpha subunit. The pyruvate dehydrogenase complex catalyzes the overall conversion of pyruvate to acetyl-CoA and CO(2). It contains multiple copies of three enzymatic components: pyruvate dehydrogenase (E1), dihydrolipoamide acetyltransferase (E2) and lipoamide dehydrogenase (E3). In Schizosaccharomyces pombe (strain 972 / ATCC 24843) (Fission yeast), this protein is Pyruvate dehydrogenase E1 component subunit alpha, mitochondrial (pda1).